Here is a 449-residue protein sequence, read N- to C-terminus: Asparagine--tRNA ligase (449 aa).

It belongs to the class-II aminoacyl-tRNA synthetase family. Homodimer.

Its subcellular location is the cytoplasm. The enzyme catalyses tRNA(Asn) + L-asparagine + ATP = L-asparaginyl-tRNA(Asn) + AMP + diphosphate + H(+). This is Asparagine--tRNA ligase from Desulfotalea psychrophila (strain LSv54 / DSM 12343).